Reading from the N-terminus, the 174-residue chain is Tat proofreading chaperone TtrD (174 aa).

Belongs to the TorD/DmsD family. As to quaternary structure, monomer.

The protein localises to the cytoplasm. Functionally, binds specifically to the Tat signal peptide of the TtrA subunit of the tetrathionate reductase. The protein is Tat proofreading chaperone TtrD (ttrD) of Archaeoglobus fulgidus (strain ATCC 49558 / DSM 4304 / JCM 9628 / NBRC 100126 / VC-16).